We begin with the raw amino-acid sequence, 69 residues long: Putative membrane protein insertion efficiency factor (69 aa).

The protein belongs to the UPF0161 family.

It localises to the cell membrane. In terms of biological role, could be involved in insertion of integral membrane proteins into the membrane. This chain is Putative membrane protein insertion efficiency factor, found in Clostridium botulinum (strain ATCC 19397 / Type A).